Consider the following 902-residue polypeptide: Protein translocase subunit SecA (902 aa).

Residues Gln87, Gly105–Thr109, and Asp512 each bind ATP. The segment at Asp847–Ala902 is disordered. Zn(2+) contacts are provided by Cys885, Cys887, Cys896, and His897. Positions Lys891–Ala902 are enriched in basic residues.

This sequence belongs to the SecA family. As to quaternary structure, monomer and homodimer. Part of the essential Sec protein translocation apparatus which comprises SecA, SecYEG and auxiliary proteins SecDF-YajC and YidC. It depends on Zn(2+) as a cofactor.

It is found in the cell inner membrane. It localises to the cytoplasm. The catalysed reaction is ATP + H2O + cellular proteinSide 1 = ADP + phosphate + cellular proteinSide 2.. Functionally, part of the Sec protein translocase complex. Interacts with the SecYEG preprotein conducting channel. Has a central role in coupling the hydrolysis of ATP to the transfer of proteins into and across the cell membrane, serving both as a receptor for the preprotein-SecB complex and as an ATP-driven molecular motor driving the stepwise translocation of polypeptide chains across the membrane. The chain is Protein translocase subunit SecA from Edwardsiella ictaluri (strain 93-146).